The following is a 431-amino-acid chain: Glutamate-1-semialdehyde 2,1-aminomutase (431 aa).

K269 carries the N6-(pyridoxal phosphate)lysine modification.

This sequence belongs to the class-III pyridoxal-phosphate-dependent aminotransferase family. HemL subfamily. Homodimer. The cofactor is pyridoxal 5'-phosphate.

The protein resides in the cytoplasm. It catalyses the reaction (S)-4-amino-5-oxopentanoate = 5-aminolevulinate. It participates in porphyrin-containing compound metabolism; protoporphyrin-IX biosynthesis; 5-aminolevulinate from L-glutamyl-tRNA(Glu): step 2/2. The protein operates within porphyrin-containing compound metabolism; chlorophyll biosynthesis. The chain is Glutamate-1-semialdehyde 2,1-aminomutase from Chlorobium phaeobacteroides (strain BS1).